A 66-amino-acid chain; its full sequence is Large ribosomal subunit protein bL33 (66 aa).

The protein belongs to the bacterial ribosomal protein bL33 family.

This chain is Large ribosomal subunit protein bL33, found in Wolbachia sp. subsp. Brugia malayi (strain TRS).